The sequence spans 152 residues: Deoxyuridine 5'-triphosphate nucleotidohydrolase (152 aa).

Substrate is bound by residues 71–73 (RSG), Asn-84, 88–90 (LID), and Lys-98.

This sequence belongs to the dUTPase family. It depends on Mg(2+) as a cofactor.

It catalyses the reaction dUTP + H2O = dUMP + diphosphate + H(+). Its pathway is pyrimidine metabolism; dUMP biosynthesis; dUMP from dCTP (dUTP route): step 2/2. In terms of biological role, this enzyme is involved in nucleotide metabolism: it produces dUMP, the immediate precursor of thymidine nucleotides and it decreases the intracellular concentration of dUTP so that uracil cannot be incorporated into DNA. This Legionella pneumophila subsp. pneumophila (strain Philadelphia 1 / ATCC 33152 / DSM 7513) protein is Deoxyuridine 5'-triphosphate nucleotidohydrolase.